The sequence spans 889 residues: DNA mismatch repair protein MutS (889 aa).

620–627 (GPNMAGKS) serves as a coordination point for ATP. The segment at 812 to 831 (AAAPSGAARRGRPAREKEPG) is disordered.

The protein belongs to the DNA mismatch repair MutS family.

Functionally, this protein is involved in the repair of mismatches in DNA. It is possible that it carries out the mismatch recognition step. This protein has a weak ATPase activity. The protein is DNA mismatch repair protein MutS of Syntrophobacter fumaroxidans (strain DSM 10017 / MPOB).